The sequence spans 361 residues: 3-dehydroquinate synthase (361 aa).

Residues 60–65 (DAEAAK), 94–98 (GATTD), 118–119 (TT), Lys-131, and Lys-140 each bind NAD(+). Glu-173, His-242, and His-258 together coordinate Zn(2+).

Belongs to the sugar phosphate cyclases superfamily. Dehydroquinate synthase family. Co(2+) is required as a cofactor. The cofactor is Zn(2+). Requires NAD(+) as cofactor.

It localises to the cytoplasm. It carries out the reaction 7-phospho-2-dehydro-3-deoxy-D-arabino-heptonate = 3-dehydroquinate + phosphate. The protein operates within metabolic intermediate biosynthesis; chorismate biosynthesis; chorismate from D-erythrose 4-phosphate and phosphoenolpyruvate: step 2/7. Its function is as follows. Catalyzes the conversion of 3-deoxy-D-arabino-heptulosonate 7-phosphate (DAHP) to dehydroquinate (DHQ). This Cutibacterium acnes (strain DSM 16379 / KPA171202) (Propionibacterium acnes) protein is 3-dehydroquinate synthase.